The sequence spans 259 residues: DNA-directed RNA polymerase 30 kDa polypeptide (259 aa).

Residues 155 to 195 (YNTPCPNCKSRNTTPMMIQTRAADEPPLVRHACRDCKQHFK) form a TFIIS-type zinc finger. Zn(2+)-binding residues include cysteine 159, cysteine 162, cysteine 187, and cysteine 190. The disordered stretch occupies residues 220-259 (EILPDNNPSPPESPEPASPIDDGLIRATFDRNDEPPEDDE). A compositionally biased stretch (pro residues) spans 226 to 236 (NPSPPESPEPA).

This sequence belongs to the poxviridae DNA-directed RNA polymerase 30 kDa subunit family. In terms of assembly, the DNA-dependent RNA polymerase (vRNAP) consists of eight subunits encoded by early viral genes and termed according to their apparent molecular masses Rpo147, Rpo132, Rpo35, Rpo30, Rpo22, Rpo19, Rpo18, and Rpo7. The same holoenzyme, with the addition of the transcription-specificity factor RAP94, is used for early gene expression.

Its subcellular location is the virion. The protein localises to the host cytoplasm. It catalyses the reaction RNA(n) + a ribonucleoside 5'-triphosphate = RNA(n+1) + diphosphate. Functionally, part of the DNA-dependent RNA polymerase which catalyzes the transcription of viral DNA into RNA using the four ribonucleoside triphosphates as substrates. Responsible for the transcription of early, intermediate and late genes. DNA-dependent RNA polymerase associates with the early transcription factor (ETF), itself composed of OPG118 and OPG134, thereby allowing the early genes transcription. Late transcription, and probably also intermediate transcription, require newly synthesized RNA polymerase. The chain is DNA-directed RNA polymerase 30 kDa polypeptide (OPG066) from Monkeypox virus.